The chain runs to 679 residues: Methionine--tRNA ligase (679 aa).

Positions 15–25 (PYANGSIHLGH) match the 'HIGH' region motif. Zn(2+) is bound by residues cysteine 146, cysteine 149, cysteine 159, and cysteine 162. Positions 332 to 336 (KMSKS) match the 'KMSKS' region motif. Residue lysine 335 participates in ATP binding. Positions 577-679 (DFAKVDMRVA…AGALPGMPVK (103 aa)) constitute a tRNA-binding domain.

This sequence belongs to the class-I aminoacyl-tRNA synthetase family. MetG type 1 subfamily. In terms of assembly, homodimer. The cofactor is Zn(2+).

It localises to the cytoplasm. The enzyme catalyses tRNA(Met) + L-methionine + ATP = L-methionyl-tRNA(Met) + AMP + diphosphate. Is required not only for elongation of protein synthesis but also for the initiation of all mRNA translation through initiator tRNA(fMet) aminoacylation. In Sodalis glossinidius (strain morsitans), this protein is Methionine--tRNA ligase.